Here is a 309-residue protein sequence, read N- to C-terminus: NAD kinase (309 aa).

Residue D89 is the Proton acceptor of the active site. Residues D89 to G90, N163 to E164, H174, R191, D193, and T204 to S209 each bind NAD(+).

This sequence belongs to the NAD kinase family. A divalent metal cation is required as a cofactor.

It is found in the cytoplasm. It catalyses the reaction NAD(+) + ATP = ADP + NADP(+) + H(+). Functionally, involved in the regulation of the intracellular balance of NAD and NADP, and is a key enzyme in the biosynthesis of NADP. Catalyzes specifically the phosphorylation on 2'-hydroxyl of the adenosine moiety of NAD to yield NADP. The sequence is that of NAD kinase from Shewanella baltica (strain OS155 / ATCC BAA-1091).